The primary structure comprises 430 residues: MKIQVENVSPVERKVSIEVDPDRVAQELERAYAGLGRRVKLRGFRPGKAPRKVLERQFRAEVESEVLEKIVQQTFAEAVKVESLPLVAPPHVSVSEGVADGKPIRYTARVEVKPAIAPKDYRGLEVTRKAPEVTDQMVSDELSRLQDSLAQLVPVEGRFEAQEDDWAVIDHEGTIDGKPFEGGKAEGVTVKVAPGAISDGNLEALKGKKLGETVELDEPFPEDHRVEQLRGKTAHMKVTLKALKTRQLPALDDALAKEAGVEGIETLDALRARIRADLEKREKRRAESEVKDALVKAALAKNEFEVPPALVERAIDSMLEGAAERFARSGIDIRRLELDFAKMRADMREQALLQVRGALLLEAIADAEKIEVTDEDLQAEAARIAEELGAPLAKVQQQMRGKDAREALKNKVREDKALALLSSAANIQPA.

The PPIase FKBP-type domain occupies 164–249 (DDWAVIDHEG…LKALKTRQLP (86 aa)).

Belongs to the FKBP-type PPIase family. Tig subfamily.

It is found in the cytoplasm. It carries out the reaction [protein]-peptidylproline (omega=180) = [protein]-peptidylproline (omega=0). In terms of biological role, involved in protein export. Acts as a chaperone by maintaining the newly synthesized protein in an open conformation. Functions as a peptidyl-prolyl cis-trans isomerase. The sequence is that of Trigger factor from Anaeromyxobacter sp. (strain Fw109-5).